We begin with the raw amino-acid sequence, 484 residues long: Proline--tRNA ligase (484 aa).

The protein belongs to the class-II aminoacyl-tRNA synthetase family. ProS type 3 subfamily. In terms of assembly, homodimer.

The protein resides in the cytoplasm. It catalyses the reaction tRNA(Pro) + L-proline + ATP = L-prolyl-tRNA(Pro) + AMP + diphosphate. In terms of biological role, catalyzes the attachment of proline to tRNA(Pro) in a two-step reaction: proline is first activated by ATP to form Pro-AMP and then transferred to the acceptor end of tRNA(Pro). This Haloarcula marismortui (strain ATCC 43049 / DSM 3752 / JCM 8966 / VKM B-1809) (Halobacterium marismortui) protein is Proline--tRNA ligase.